The sequence spans 160 residues: Ureidoglycolate lyase (160 aa).

The protein belongs to the ureidoglycolate lyase family. In terms of assembly, homodimer. The cofactor is Ni(2+).

It carries out the reaction (S)-ureidoglycolate = urea + glyoxylate. The protein operates within nitrogen metabolism; (S)-allantoin degradation. In terms of biological role, catalyzes the catabolism of the allantoin degradation intermediate (S)-ureidoglycolate, generating urea and glyoxylate. Involved in the anaerobic utilization of allantoin as sole nitrogen source. Reinforces the induction of genes involved in the degradation of allantoin and glyoxylate by producing glyoxylate. This is Ureidoglycolate lyase from Escherichia coli O139:H28 (strain E24377A / ETEC).